The sequence spans 68 residues: Putative membrane protein insertion efficiency factor (68 aa).

This sequence belongs to the UPF0161 family.

The protein localises to the cell inner membrane. Its function is as follows. Could be involved in insertion of integral membrane proteins into the membrane. The polypeptide is Putative membrane protein insertion efficiency factor (Persephonella marina (strain DSM 14350 / EX-H1)).